The chain runs to 351 residues: Phospho-N-acetylmuramoyl-pentapeptide-transferase (351 aa).

The next 10 membrane-spanning stretches (helical) occupy residues 17–37 (MAYA…YIIL), 62–82 (GIPT…LVFW), 85–105 (ILNV…FLGF), 130–150 (IIFS…HVSV), 158–178 (SFQI…LISA), 190–210 (GLAI…AYLT), 230–250 (LVIF…FNAY), 254–274 (IMMG…AALI), 279–299 (ILFS…IIQV), and 328–348 (QVVI…LSTI).

This sequence belongs to the glycosyltransferase 4 family. MraY subfamily. Requires Mg(2+) as cofactor.

It is found in the cell inner membrane. It catalyses the reaction UDP-N-acetyl-alpha-D-muramoyl-L-alanyl-gamma-D-glutamyl-meso-2,6-diaminopimeloyl-D-alanyl-D-alanine + di-trans,octa-cis-undecaprenyl phosphate = di-trans,octa-cis-undecaprenyl diphospho-N-acetyl-alpha-D-muramoyl-L-alanyl-D-glutamyl-meso-2,6-diaminopimeloyl-D-alanyl-D-alanine + UMP. It participates in cell wall biogenesis; peptidoglycan biosynthesis. Catalyzes the initial step of the lipid cycle reactions in the biosynthesis of the cell wall peptidoglycan: transfers peptidoglycan precursor phospho-MurNAc-pentapeptide from UDP-MurNAc-pentapeptide onto the lipid carrier undecaprenyl phosphate, yielding undecaprenyl-pyrophosphoryl-MurNAc-pentapeptide, known as lipid I. In Borreliella burgdorferi (strain ATCC 35210 / DSM 4680 / CIP 102532 / B31) (Borrelia burgdorferi), this protein is Phospho-N-acetylmuramoyl-pentapeptide-transferase.